Here is a 482-residue protein sequence, read N- to C-terminus: Solute carrier family 49 member A3 (482 aa).

12 helical membrane-spanning segments follow: residues 41–61 (WFVLGVICLLSCTNAMLWISF), 81–101 (YLSLVYLIIAIPVGFGASWLI), 109–129 (AIVFSSWLNMIGSIIRCGAIV), 150–170 (LCAIAQPLVLFVPAKLASVWF), 181–201 (IASMSNPLGVLLANIISPSVV), 206–226 (YIAHMLGIYTVPAIAACILAT), 264–284 (VILMLCFGAGIGIFTAISSFL), 296–316 (LFAGVCGALFIFFGFIGAFVC), 330–350 (VKTCFALTALTSIAFALVINF), 355–375 (VLVACVCSLLGLFGFAISPVG), 390–410 (SSTGLAFISGQIQGIIYMILF), and 437–457 (TSMLVMAALCSFGSCIFIIFF).

Belongs to the major facilitator superfamily.

It localises to the membrane. This Xenopus tropicalis (Western clawed frog) protein is Solute carrier family 49 member A3 (slc49a3).